We begin with the raw amino-acid sequence, 330 residues long: Free fatty acid receptor 2 (330 aa).

The Extracellular segment spans residues 1-8 (MTPDWHSS). The helical transmembrane segment at 9–29 (LILTAYILIFLTGLPANLLAL) threads the bilayer. Topologically, residues 30-43 (RAFMGRVRQPQPAP) are cytoplasmic. Residues 44-64 (VHILLLNLTLADLLLLLLLPF) form a helical membrane-spanning segment. Topologically, residues 65-79 (RIVEAASNFRWYLPK) are extracellular. A helical transmembrane segment spans residues 80 to 100 (IVCALTGFGFYSSIYCSTWLL). Residues 101-126 (AGISMERYLGVAFPVQYKLSRRPLYG) lie on the Cytoplasmic side of the membrane. Residues 127–147 (VIAALVAWIMSFGHCTIVIIV) traverse the membrane as a helical segment. Over 148–184 (QYLNSTEQVGTENQITCYENFTQEQLDVVLPVRLELC) the chain is Extracellular. N-linked (GlcNAc...) asparagine glycans are attached at residues Asn-151 and Asn-167. The helical transmembrane segment at 185 to 205 (LVLFFVPMAVTIFCYWRFVWI) threads the bilayer. Residues 206 to 219 (MLTQPHVGAQRRRR) lie on the Cytoplasmic side of the membrane. A helical transmembrane segment spans residues 220–240 (AVGLAVVTLLNFLVCFGPYNM). The Extracellular segment spans residues 241-255 (SHLVGFYLRQSPSWR). Residues 256–276 (VEAVVFSSLNASLDPLLFYFS) form a helical membrane-spanning segment. At 277-330 (SSVVRRAFGKGLLLIRNPASSMLGRGAKETVEGTKMDRGGSQAEGVQSSEFVTE) the chain is on the cytoplasmic side. The interval 306 to 330 (TVEGTKMDRGGSQAEGVQSSEFVTE) is disordered. The span at 320-330 (EGVQSSEFVTE) shows a compositional bias: polar residues.

Belongs to the G-protein coupled receptor 1 family. As to quaternary structure, interacts with FCN1 (via Fibrinogen C-terminal domain). Highly expressed in hematopoietic tissues, such as spleen and bone marrow, with highest levels in a subset of immune cells, including monocytes or neutrophils. Expressed in adipose tissues with high expression in differentiating adipocytes. Expressed by intestinal endocrine cells.

The protein localises to the cell membrane. G protein-coupled receptor that is activated by a major product of dietary fiber digestion, the short chain fatty acids (SCFAs), and that plays a role in the regulation of whole-body energy homeostasis and in intestinal immunity. In omnivorous mammals, the short chain fatty acids acetate, propionate and butyrate are produced primarily by the gut microbiome that metabolizes dietary fibers. SCFAs serve as a source of energy but also act as signaling molecules. That G protein-coupled receptor is probably coupled to the pertussis toxin-sensitive, G(i/o)-alpha family of G proteins but also to the Gq family. Its activation results in the formation of inositol 1,4,5-trisphosphate, the mobilization of intracellular calcium, the phosphorylation of the MAPK3/ERK1 and MAPK1/ERK2 kinases and the inhibition of intracellular cAMP accumulation. May play a role in glucose homeostasis by regulating the secretion of GLP-1, in response to short-chain fatty acids accumulating in the intestine. May also regulate the production of LEP/Leptin, a hormone acting on the central nervous system to inhibit food intake. Finally, may also regulate whole-body energy homeostasis through adipogenesis regulating both differentiation and lipid storage of adipocytes. In parallel to its role in energy homeostasis, may also mediate the activation of the inflammatory and immune responses by SCFA in the intestine, regulating the rapid production of chemokines and cytokines. May also play a role in the resolution of the inflammatory response and control chemotaxis in neutrophils. In addition to SCFAs, may also be activated by the extracellular lectin FCN1 in a process leading to activation of monocytes and inducing the secretion of interleukin-8/IL-8 in response to the presence of microbes. This chain is Free fatty acid receptor 2 (Ffar2), found in Mus musculus (Mouse).